The primary structure comprises 344 residues: Putative NAD(P)H nitroreductase MT3217 (344 aa).

FMN-binding positions include 40-44 and R326; that span reads QPWRW.

Belongs to the nitroreductase family. As to quaternary structure, interacts with human TLR2. The cofactor is FMN.

In terms of biological role, stimulates pro-inflammatory cytokine expression via TLR2 signaling pathway. Activation of TLR2 results in the phosphorylation and activation of NF-kappa-B. Also induces TLR2 expression. May influence the innate immune responses to facilitate the survival of M.tuberculosis in the granulomatous microenvironment. This is Putative NAD(P)H nitroreductase MT3217 from Mycobacterium tuberculosis (strain CDC 1551 / Oshkosh).